The following is a 419-amino-acid chain: Elongation factor Tu, chloroplastic (419 aa).

The tr-type G domain occupies 10 to 214 (KPHVNIGTIG…TVDEHIPTPK (205 aa)). The segment at 19–26 (GHVDHGKT) is G1. 19–26 (GHVDHGKT) contributes to the GTP binding site. Thr-26 provides a ligand contact to Mg(2+). The G2 stretch occupies residues 60 to 64 (GITIN). Positions 81-84 (DCPG) are G3. GTP is bound by residues 81 to 85 (DCPGH) and 136 to 139 (NKAD). The interval 136-139 (NKAD) is G4. Residues 174-176 (SAL) are G5.

The protein belongs to the TRAFAC class translation factor GTPase superfamily. Classic translation factor GTPase family. EF-Tu/EF-1A subfamily.

Its subcellular location is the plastid. The protein localises to the chloroplast. It carries out the reaction GTP + H2O = GDP + phosphate + H(+). GTP hydrolase that promotes the GTP-dependent binding of aminoacyl-tRNA to the A-site of ribosomes during protein biosynthesis. The protein is Elongation factor Tu, chloroplastic (tufA) of Stigeoclonium helveticum (Green alga).